A 273-amino-acid polypeptide reads, in one-letter code: ATP synthase subunit a (273 aa).

Transmembrane regions (helical) follow at residues I41–F61, L101–L121, L122–V142, V143–I163, P183–S203, L221–P241, and I247–M267.

This sequence belongs to the ATPase A chain family. F-type ATPases have 2 components, CF(1) - the catalytic core - and CF(0) - the membrane proton channel. CF(1) has five subunits: alpha(3), beta(3), gamma(1), delta(1), epsilon(1). CF(0) has three main subunits: a(1), b(2) and c(9-12). The alpha and beta chains form an alternating ring which encloses part of the gamma chain. CF(1) is attached to CF(0) by a central stalk formed by the gamma and epsilon chains, while a peripheral stalk is formed by the delta and b chains.

It localises to the cell membrane. Functionally, key component of the proton channel; it plays a direct role in the translocation of protons across the membrane. The polypeptide is ATP synthase subunit a (Baumannia cicadellinicola subsp. Homalodisca coagulata).